A 247-amino-acid polypeptide reads, in one-letter code: ATP synthase subunit a, chloroplastic (247 aa).

The next 5 helical transmembrane spans lie at 38 to 58, 95 to 115, 134 to 154, 199 to 219, and 220 to 240; these read QVLITSWVVIAILLGSAAIAV, VPFIGTMFLFIFVSNWSGALL, INTTVALALLTSVAYFYAGLT, LVVVVLVSLVPLVVPIPVMFL, and GLFTSGIQALIFATLAAAYIG.

This sequence belongs to the ATPase A chain family. In terms of assembly, F-type ATPases have 2 components, CF(1) - the catalytic core - and CF(0) - the membrane proton channel. CF(1) has five subunits: alpha(3), beta(3), gamma(1), delta(1), epsilon(1). CF(0) has four main subunits: a, b, b' and c.

Its subcellular location is the plastid. It localises to the chloroplast thylakoid membrane. Its function is as follows. Key component of the proton channel; it plays a direct role in the translocation of protons across the membrane. In Calycanthus floridus var. glaucus (Eastern sweetshrub), this protein is ATP synthase subunit a, chloroplastic.